The sequence spans 240 residues: Coatomer subunit delta (240 aa).

Residues 215–226 (AAAKASSAPKAK) show a composition bias toward low complexity. Residues 215–240 (AAAKASSAPKAKGMQLGKKKNTSLLY) are disordered. Residues 231–240 (GKKKNTSLLY) show a composition bias toward basic residues.

The protein belongs to the adaptor complexes medium subunit family. Delta-COP subfamily. In terms of assembly, oligomeric complex that consists of at least the alpha, beta, beta', gamma, delta, epsilon and zeta subunits.

It localises to the cytoplasm. The protein resides in the nucleus. In terms of biological role, the coatomer is a cytosolic protein complex that binds to dilysine motifs and reversibly associates with Golgi non-clathrin-coated vesicles, which further mediate biosynthetic protein transport from the ER, via the Golgi up to the trans Golgi network. Coatomer complex is required for budding from Golgi membranes, and is essential for the retrograde Golgi-to-ER transport of dilysine-tagged proteins. The sequence is that of Coatomer subunit delta (ret2) from Schizosaccharomyces pombe (strain 972 / ATCC 24843) (Fission yeast).